A 487-amino-acid chain; its full sequence is Glutamyl-tRNA(Gln) amidotransferase subunit A (487 aa).

Catalysis depends on charge relay system residues K75 and S150. Catalysis depends on S174, which acts as the Acyl-ester intermediate.

It belongs to the amidase family. GatA subfamily. In terms of assembly, heterotrimer of A, B and C subunits.

It carries out the reaction L-glutamyl-tRNA(Gln) + L-glutamine + ATP + H2O = L-glutaminyl-tRNA(Gln) + L-glutamate + ADP + phosphate + H(+). Allows the formation of correctly charged Gln-tRNA(Gln) through the transamidation of misacylated Glu-tRNA(Gln) in organisms which lack glutaminyl-tRNA synthetase. The reaction takes place in the presence of glutamine and ATP through an activated gamma-phospho-Glu-tRNA(Gln). The chain is Glutamyl-tRNA(Gln) amidotransferase subunit A from Deinococcus deserti (strain DSM 17065 / CIP 109153 / LMG 22923 / VCD115).